The sequence spans 85 residues: Acylphosphatase (85 aa).

An Acylphosphatase-like domain is found at 3-85 (AARFVVSGVV…PARFRRLKTL (83 aa)). Residues arginine 18 and asparagine 36 contribute to the active site. Residues 66 to 85 (PPRSRRSRARPARFRRLKTL) form a disordered region.

This sequence belongs to the acylphosphatase family.

The enzyme catalyses an acyl phosphate + H2O = a carboxylate + phosphate + H(+). This is Acylphosphatase (acyP) from Xanthomonas axonopodis pv. citri (strain 306).